The sequence spans 334 residues: Ferrochelatase (334 aa).

The Fe cation site is built by His-207 and Glu-288.

This sequence belongs to the ferrochelatase family.

Its subcellular location is the cytoplasm. It catalyses the reaction heme b + 2 H(+) = protoporphyrin IX + Fe(2+). It functions in the pathway porphyrin-containing compound metabolism; protoheme biosynthesis; protoheme from protoporphyrin-IX: step 1/1. Its function is as follows. Catalyzes the ferrous insertion into protoporphyrin IX. The protein is Ferrochelatase of Helicobacter pylori (strain ATCC 700392 / 26695) (Campylobacter pylori).